The chain runs to 92 residues: N(2)-fixation sustaining protein CowN (92 aa).

Belongs to the CowN family.

In terms of biological role, is required to sustain N(2)-dependent growth in the presence of low levels of carbon monoxide (CO). Probably acts by protecting the N(2) fixation ability of the nitrogenase complex, which is inactivated in the presence of CO. The chain is N(2)-fixation sustaining protein CowN from Rhodopseudomonas palustris (strain ATCC BAA-98 / CGA009).